The primary structure comprises 874 residues: Alanine--tRNA ligase (874 aa).

Residues His-562, His-566, Cys-665, and His-669 each coordinate Zn(2+).

This sequence belongs to the class-II aminoacyl-tRNA synthetase family. Zn(2+) serves as cofactor.

It localises to the cytoplasm. It catalyses the reaction tRNA(Ala) + L-alanine + ATP = L-alanyl-tRNA(Ala) + AMP + diphosphate. Its function is as follows. Catalyzes the attachment of alanine to tRNA(Ala) in a two-step reaction: alanine is first activated by ATP to form Ala-AMP and then transferred to the acceptor end of tRNA(Ala). Also edits incorrectly charged Ser-tRNA(Ala) and Gly-tRNA(Ala) via its editing domain. The polypeptide is Alanine--tRNA ligase (Pseudomonas syringae pv. tomato (strain ATCC BAA-871 / DC3000)).